A 168-amino-acid chain; its full sequence is Endoribonuclease YbeY (168 aa).

The Zn(2+) site is built by H132, H136, and H142.

This sequence belongs to the endoribonuclease YbeY family. It depends on Zn(2+) as a cofactor.

It is found in the cytoplasm. Functionally, single strand-specific metallo-endoribonuclease involved in late-stage 70S ribosome quality control and in maturation of the 3' terminus of the 16S rRNA. The sequence is that of Endoribonuclease YbeY from Clostridium perfringens (strain SM101 / Type A).